A 2358-amino-acid chain; its full sequence is Cell wall alpha-1,3-glucan synthase mok13 (2358 aa).

Basic and acidic residues predominate over residues 1645–1659; sequence EGLENEENELKDKAP. The interval 1645 to 1669 is disordered; sequence EGLENEENELKDKAPPNEPNVGSLF.

The protein belongs to the glycosyltransferase group 1 family.

It catalyses the reaction [(1-&gt;3)-alpha-D-glucosyl](n) + UDP-alpha-D-glucose = [(1-&gt;3)-alpha-D-glucosyl](n+1) + UDP + H(+). The protein is Cell wall alpha-1,3-glucan synthase mok13 (mok13) of Schizosaccharomyces pombe (strain 972 / ATCC 24843) (Fission yeast).